Reading from the N-terminus, the 377-residue chain is Phospho-N-acetylmuramoyl-pentapeptide-transferase (377 aa).

10 consecutive transmembrane segments (helical) span residues 27-47 (TAFA…YVIE), 71-91 (GTPT…TLLW), 94-114 (LSDP…AIGF), 139-159 (ILAS…GSYS), 182-202 (VPHL…IVIV), 216-236 (GLAI…TYVS), 252-272 (MVGE…GFLW), 280-300 (IFMG…VAVV), 305-325 (LLLP…ILQV), and 354-374 (KVIV…LTTL).

Belongs to the glycosyltransferase 4 family. MraY subfamily. It depends on Mg(2+) as a cofactor.

Its subcellular location is the cell inner membrane. It carries out the reaction UDP-N-acetyl-alpha-D-muramoyl-L-alanyl-gamma-D-glutamyl-meso-2,6-diaminopimeloyl-D-alanyl-D-alanine + di-trans,octa-cis-undecaprenyl phosphate = di-trans,octa-cis-undecaprenyl diphospho-N-acetyl-alpha-D-muramoyl-L-alanyl-D-glutamyl-meso-2,6-diaminopimeloyl-D-alanyl-D-alanine + UMP. Its pathway is cell wall biogenesis; peptidoglycan biosynthesis. In terms of biological role, catalyzes the initial step of the lipid cycle reactions in the biosynthesis of the cell wall peptidoglycan: transfers peptidoglycan precursor phospho-MurNAc-pentapeptide from UDP-MurNAc-pentapeptide onto the lipid carrier undecaprenyl phosphate, yielding undecaprenyl-pyrophosphoryl-MurNAc-pentapeptide, known as lipid I. This Acidobacterium capsulatum (strain ATCC 51196 / DSM 11244 / BCRC 80197 / JCM 7670 / NBRC 15755 / NCIMB 13165 / 161) protein is Phospho-N-acetylmuramoyl-pentapeptide-transferase.